The sequence spans 249 residues: GTP cyclohydrolase 1 type 2 homolog (249 aa).

Residues histidine 64, histidine 65, aspartate 102, histidine 217, and glutamate 221 each contribute to the a divalent metal cation site.

Belongs to the GTP cyclohydrolase I type 2/NIF3 family. Homohexamer.

In Neisseria meningitidis serogroup B (strain ATCC BAA-335 / MC58), this protein is GTP cyclohydrolase 1 type 2 homolog.